A 235-amino-acid polypeptide reads, in one-letter code: MKVIVVKNQLEGGKIGLDLLKESINNGAKTLGLATGSTPVEFYNQIVNSDLDFTNMVSVNLDEYVGLDGSNEQSYRYFMTKHLFGEKPFKENFLPNGKATDLEAEAKHYDQIIEENPIDWQILGIGQNGHIGFNEPGTPAEITTHVVDLQESTIKANARFFESEADVPRKAISMGLASIMKSKNIVLMAYGKEKAEAIKGMVEGEVTTELPASILQNHANVTVIADEAAVSLLSK.

Aspartate 62 functions as the Proton acceptor; for enolization step in the catalytic mechanism. Catalysis depends on asparagine 128, which acts as the For ring-opening step. The Proton acceptor; for ring-opening step role is filled by histidine 130. Glutamate 135 serves as the catalytic For ring-opening step.

It belongs to the glucosamine/galactosamine-6-phosphate isomerase family. NagB subfamily.

It catalyses the reaction alpha-D-glucosamine 6-phosphate + H2O = beta-D-fructose 6-phosphate + NH4(+). It participates in amino-sugar metabolism; N-acetylneuraminate degradation; D-fructose 6-phosphate from N-acetylneuraminate: step 5/5. Its function is as follows. Catalyzes the reversible isomerization-deamination of glucosamine 6-phosphate (GlcN6P) to form fructose 6-phosphate (Fru6P) and ammonium ion. This Lactococcus lactis subsp. cremoris (strain SK11) protein is Glucosamine-6-phosphate deaminase.